The chain runs to 275 residues: Spermidine/putrescine transport system permease protein PotB (275 aa).

A helical transmembrane segment spans residues 1–21 (MIVTIVGWLVLFVFLPNLMII). At 22-60 (GTSFLTRDDASFVKMVFTLDNYTRLLDPLYFEVLLHSLN) the chain is on the periplasmic side. The ABC transmembrane type-1 domain occupies 55-261 (LLHSLNMALI…IVMGLMLLVY (207 aa)). Residues 61 to 81 (MALIATLACLVLGYPFAWFLA) traverse the membrane as a helical segment. At 82-89 (KLPHKVRP) the chain is on the cytoplasmic side. A helical membrane pass occupies residues 90 to 110 (LLLFLLIVPFWTNSLIRIYGL). At 111–135 (KIFLSTKGYLNEFLLWLGVIDTPIR) the chain is on the periplasmic side. The helical transmembrane segment at 136–156 (IMFTPSAVIIGLVYILLPFMV) threads the bilayer. Residues 157–187 (MPLYSSIEKLDKPLLEAARDLGASKLQTFIR) are Cytoplasmic-facing. Residues 188–208 (IIIPLTMPGIIAGCLLVMLPA) form a helical membrane-spanning segment. Residues 209–241 (MGLFYVSDLMGGAKNLLIGNVIKVQFLNIRDWP) are Periplasmic-facing. The chain crosses the membrane as a helical span at residues 242-262 (FGAATSITLTIVMGLMLLVYW). The Cytoplasmic portion of the chain corresponds to 263 to 275 (RASRLLNKKVELE).

Belongs to the binding-protein-dependent transport system permease family. CysTW subfamily.

Its subcellular location is the cell inner membrane. Its function is as follows. Required for the activity of the bacterial periplasmic transport system of putrescine and spermidine. The chain is Spermidine/putrescine transport system permease protein PotB (potB) from Escherichia coli (strain K12).